We begin with the raw amino-acid sequence, 357 residues long: tRNA pseudouridine synthase Pus10 (357 aa).

Residues 1–118 (MNLCRECYGI…TFTFELQIRP (118 aa)) enclose the THUMP domain. The active-site Nucleophile is aspartate 187. Substrate-binding residues include tyrosine 251 and tyrosine 322.

This sequence belongs to the pseudouridine synthase Pus10 family.

It catalyses the reaction uridine(54) in tRNA = pseudouridine(54) in tRNA. The enzyme catalyses uridine(55) in tRNA = pseudouridine(55) in tRNA. Responsible for synthesis of pseudouridine from uracil-54 and uracil-55 in the psi GC loop of transfer RNAs. The polypeptide is tRNA pseudouridine synthase Pus10 (Archaeoglobus fulgidus (strain ATCC 49558 / DSM 4304 / JCM 9628 / NBRC 100126 / VC-16)).